Here is a 202-residue protein sequence, read N- to C-terminus: Nucleoside triphosphate pyrophosphatase (202 aa).

Aspartate 79 functions as the Proton acceptor in the catalytic mechanism.

The protein belongs to the Maf family. The cofactor is a divalent metal cation.

It is found in the cytoplasm. It carries out the reaction a ribonucleoside 5'-triphosphate + H2O = a ribonucleoside 5'-phosphate + diphosphate + H(+). It catalyses the reaction a 2'-deoxyribonucleoside 5'-triphosphate + H2O = a 2'-deoxyribonucleoside 5'-phosphate + diphosphate + H(+). Its function is as follows. Nucleoside triphosphate pyrophosphatase. May have a dual role in cell division arrest and in preventing the incorporation of modified nucleotides into cellular nucleic acids. The sequence is that of Nucleoside triphosphate pyrophosphatase from Rhodopseudomonas palustris (strain BisB18).